The chain runs to 236 residues: Phosphoglycolate phosphatase (236 aa).

The Nucleophile role is filled by D23. Residues D23 and D25 each coordinate Mg(2+). K162 lines the substrate pocket. Positions 185 and 189 each coordinate Mg(2+).

It belongs to the archaeal SPP-like hydrolase family. Mg(2+) is required as a cofactor.

The catalysed reaction is 2-phosphoglycolate + H2O = glycolate + phosphate. Functionally, catalyzes the dephosphorylation of 2-phosphoglycolate. The polypeptide is Phosphoglycolate phosphatase (Picrophilus torridus (strain ATCC 700027 / DSM 9790 / JCM 10055 / NBRC 100828 / KAW 2/3)).